Reading from the N-terminus, the 347-residue chain is Probable RNA methyltransferase Lcho_2507 (347 aa).

Glu-89 acts as the Proton acceptor in catalysis. Residues 92 to 318 (LLPRDGLCVS…TKLRQSAGQD (227 aa)) form the Radical SAM core domain. Cys-99 and Cys-323 are disulfide-bonded. [4Fe-4S] cluster contacts are provided by Cys-106, Cys-110, and Cys-113. S-adenosyl-L-methionine is bound by residues 151-152 (GE), Ser-181, 204-206 (SLH), and Asn-280. The active-site S-methylcysteine intermediate is the Cys-323.

Belongs to the radical SAM superfamily. RlmN family. The cofactor is [4Fe-4S] cluster.

It localises to the cytoplasm. In Leptothrix cholodnii (strain ATCC 51168 / LMG 8142 / SP-6) (Leptothrix discophora (strain SP-6)), this protein is Probable RNA methyltransferase Lcho_2507.